A 222-amino-acid chain; its full sequence is Putative N-acetylmannosamine-6-phosphate 2-epimerase (222 aa).

The protein belongs to the NanE family.

It carries out the reaction an N-acyl-D-glucosamine 6-phosphate = an N-acyl-D-mannosamine 6-phosphate. Its pathway is amino-sugar metabolism; N-acetylneuraminate degradation; D-fructose 6-phosphate from N-acetylneuraminate: step 3/5. Functionally, converts N-acetylmannosamine-6-phosphate (ManNAc-6-P) to N-acetylglucosamine-6-phosphate (GlcNAc-6-P). The polypeptide is Putative N-acetylmannosamine-6-phosphate 2-epimerase (Staphylococcus saprophyticus subsp. saprophyticus (strain ATCC 15305 / DSM 20229 / NCIMB 8711 / NCTC 7292 / S-41)).